The chain runs to 143 residues: UPF0763 protein HH_0976 (143 aa).

This sequence belongs to the UPF0763 family.

The protein is UPF0763 protein HH_0976 of Helicobacter hepaticus (strain ATCC 51449 / 3B1).